The sequence spans 218 residues: Small ribosomal subunit protein uS3c (218 aa).

The region spanning 47–118 is the KH type-2 domain; it reads VQKNMRTSSG…KLNIAVTRIA (72 aa).

It belongs to the universal ribosomal protein uS3 family. In terms of assembly, part of the 30S ribosomal subunit.

Its subcellular location is the plastid. The protein localises to the chloroplast. The polypeptide is Small ribosomal subunit protein uS3c (rps3) (Solanum lycopersicum (Tomato)).